The primary structure comprises 527 residues: Eukaryotic translation initiation factor 2 subunit gamma (527 aa).

A disordered region spans residues 1–83 (MSDLQDQEPS…GLPEQPLNPD (83 aa)). Phosphothreonine is present on Thr-60. The 210-residue stretch at 98 to 307 (QATINIGTIG…IVKTIPVPPR (210 aa)) folds into the tr-type G domain. Residues 107-114 (GHVAHGKS) are G1. 110–115 (AHGKST) is a binding site for GTP. Residues 135–139 (NITIK) form a G2 region. Residues 193–196 (DCPG) form a G3 region. GTP is bound at residue 249 to 252 (NKVD). Residues 249-252 (NKVD) are G4. Ser-258 bears the Phosphoserine mark. 284-286 (SAQ) is a GTP binding site. The G5 stretch occupies residues 284–286 (SAQ). The interval 515 to 527 (ATIKKGTTLEPIA) is interacts with CDC123.

The protein belongs to the TRAFAC class translation factor GTPase superfamily. Classic translation factor GTPase family. EIF2G subfamily. In terms of assembly, eukaryotic translation initiation factor 2 eIF2 is a heterotrimeric complex composed of an alpha, a beta and a gamma subunit. The factors eIF-1, eIF-1A, eIF-2, eIF-3, TIF5/eIF-5 and methionyl-tRNAi form a multifactor complex (MFC) that may bind to the 40S ribosome. Interacts (via C-terminus) with CDC123; the interaction is direct. Interacts with GCD1. Interacts with the eIF2B complex subunits GCD6 and GCD7. Interacts with methionyl-initiator methionine tRNA.

The protein localises to the cytoplasm. The protein resides in the cytosol. It carries out the reaction GTP + H2O = GDP + phosphate + H(+). In terms of biological role, as a subunit of eukaryotic initiation factor 2 eIF2, involved in the early steps of protein synthesis. In the presence of GTP, eIF-2 forms a ternary complex with initiator tRNA Met-tRNAi and then recruits the 40S ribosomal complex and initiation factors eIF-1, eIF-1A and eIF-3 to form the 43S pre-initiation complex (43S PIC), a step that determines the rate of protein translation. The 43S PIC binds to mRNA and scans downstream to the initiation codon, where it forms a 48S initiation complex by codon-anticodon base pairing. This leads to the displacement of eIF-1 to allow GTPase-activating protein (GAP) eIF-5-mediated hydrolysis of eIF2-bound GTP. Hydrolysis of GTP and release of Pi, which makes GTP hydrolysis irreversible, causes the release of the eIF-2-GDP binary complex from the 40S subunit, an event that is essential for the subsequent joining of the 60S ribosomal subunit to form an elongation-competent 80S ribosome. In order for eIF-2 to recycle and catalyze another round of initiation, the GDP bound to eIF-2 must be exchanged with GTP by way of a reaction catalyzed by GDP-GTP exchange factor (GEF) eIF-2B. This is Eukaryotic translation initiation factor 2 subunit gamma (GCD11) from Saccharomyces cerevisiae (strain ATCC 204508 / S288c) (Baker's yeast).